The sequence spans 938 residues: Glutamate receptor 3.1 (938 aa).

Residues 1–20 form the signal peptide; it reads MKFIFYLFSIFCCLCSCAQS. The Extracellular segment spans residues 21 to 588; that stretch reads QNISGRPDAV…GGWAFLQPFT (568 aa). N-linked (GlcNAc...) asparagine glycans are attached at residues asparagine 22, asparagine 39, asparagine 59, asparagine 340, asparagine 418, asparagine 436, and asparagine 551. The chain crosses the membrane as a helical span at residues 589-609; the sequence is IKMWTVTGLFFLIIGTVVWML. Topologically, residues 610–618 are cytoplasmic; that stretch reads EHRINDEFR. The chain crosses the membrane as a helical span at residues 619 to 639; the sequence is GPPAKQLITVFWFSFSTLFFA. Residues 640-650 are Cytoplasmic-facing; the sequence is HREDTRSTLGR. The helical transmembrane segment at 651-671 threads the bilayer; sequence FVIIIWLFVVLIIQSSYTASL. Residues 672–830 are Extracellular-facing; the sequence is TSILTVQQLT…ELDQDPDRLD (159 aa). A helical transmembrane segment spans residues 831 to 851; that stretch reads VYSFSALFLICGLACIFALAI. At 852-938 the chain is on the cytoplasmic side; it reads HACNLFYQYS…SGSGSTTASC (87 aa). The disordered stretch occupies residues 906-938; the sequence is AAKEKASGLGGSGGSMSGVSFTSSGSGSTTASC. The span at 922–938 shows a compositional bias: low complexity; sequence SGVSFTSSGSGSTTASC.

It belongs to the glutamate-gated ion channel (TC 1.A.10.1) family. In terms of assembly, may form homomultimers. Expressed at low levels in roots and leaves.

The protein localises to the membrane. Glutamate-gated receptor that probably acts as a non-selective cation channel. Involved in root development. May regulate cell proliferation and cell death in the root apex. In Oryza sativa subsp. japonica (Rice), this protein is Glutamate receptor 3.1 (GLR3.1).